Reading from the N-terminus, the 229-residue chain is DNA mismatch repair protein MutH (229 aa).

This sequence belongs to the MutH family.

Its subcellular location is the cytoplasm. In terms of biological role, sequence-specific endonuclease that cleaves unmethylated GATC sequences. It is involved in DNA mismatch repair. The chain is DNA mismatch repair protein MutH from Escherichia coli O6:K15:H31 (strain 536 / UPEC).